We begin with the raw amino-acid sequence, 727 residues long: Glucans biosynthesis glucosyltransferase H (727 aa).

Positions 18 to 45 are disordered; the sequence is SAMPNERPGAMEPQSLTEMPEGFPRRST. 7 consecutive transmembrane segments (helical) span residues 58 to 78, 90 to 110, 278 to 298, 408 to 428, 460 to 480, 496 to 516, and 572 to 592; these read FFVV…MGAV, LVLL…CSGI, LQQF…GWWV, IMAY…LMLA, LFYI…LLLL, IFSV…MMFI, and LLAW…ISAW.

Belongs to the glycosyltransferase 2 family. OpgH subfamily.

It localises to the cell inner membrane. Its pathway is glycan metabolism; osmoregulated periplasmic glucan (OPG) biosynthesis. Its function is as follows. Involved in the biosynthesis of osmoregulated periplasmic glucans (OPGs). The protein is Glucans biosynthesis glucosyltransferase H of Shewanella putrefaciens (strain CN-32 / ATCC BAA-453).